Reading from the N-terminus, the 260-residue chain is Cytosolic Fe-S cluster assembly factor Nubp2 homolog 2 (260 aa).

Position 14 to 21 (14 to 21 (GKGGVGKS)) interacts with ATP. The [4Fe-4S] cluster site is built by cysteine 188 and cysteine 191.

This sequence belongs to the Mrp/NBP35 ATP-binding proteins family. NUBP2/CFD1 subfamily. In terms of assembly, heterotetramer of 2 Nubp1 and 2 Nubp2 chains. [4Fe-4S] cluster is required as a cofactor.

It is found in the cytoplasm. Its function is as follows. Component of the cytosolic iron-sulfur (Fe/S) protein assembly (CIA) machinery. Required for maturation of extramitochondrial Fe-S proteins. The Nubp1-Nubp2 heterotetramer forms a Fe-S scaffold complex, mediating the de novo assembly of an Fe-S cluster and its transfer to target apoproteins. The polypeptide is Cytosolic Fe-S cluster assembly factor Nubp2 homolog 2 (Drosophila yakuba (Fruit fly)).